A 345-amino-acid chain; its full sequence is Protein RecA (345 aa).

An ATP-binding site is contributed by 65 to 72 (GPESSGKT).

Belongs to the RecA family.

It localises to the cytoplasm. In terms of biological role, can catalyze the hydrolysis of ATP in the presence of single-stranded DNA, the ATP-dependent uptake of single-stranded DNA by duplex DNA, and the ATP-dependent hybridization of homologous single-stranded DNAs. It interacts with LexA causing its activation and leading to its autocatalytic cleavage. This Sulfurimonas denitrificans (strain ATCC 33889 / DSM 1251) (Thiomicrospira denitrificans (strain ATCC 33889 / DSM 1251)) protein is Protein RecA.